The sequence spans 190 residues: Protein GrpE (190 aa).

The segment covering 1–18 has biased composition (polar residues); that stretch reads MTETPNTSSEEIQTSEPS. Residues 1-21 are disordered; sequence MTETPNTSSEEIQTSEPSPDN.

Belongs to the GrpE family. In terms of assembly, homodimer.

The protein localises to the cytoplasm. Participates actively in the response to hyperosmotic and heat shock by preventing the aggregation of stress-denatured proteins, in association with DnaK and GrpE. It is the nucleotide exchange factor for DnaK and may function as a thermosensor. Unfolded proteins bind initially to DnaJ; upon interaction with the DnaJ-bound protein, DnaK hydrolyzes its bound ATP, resulting in the formation of a stable complex. GrpE releases ADP from DnaK; ATP binding to DnaK triggers the release of the substrate protein, thus completing the reaction cycle. Several rounds of ATP-dependent interactions between DnaJ, DnaK and GrpE are required for fully efficient folding. The protein is Protein GrpE of Chlamydia trachomatis serovar A (strain ATCC VR-571B / DSM 19440 / HAR-13).